A 305-amino-acid polypeptide reads, in one-letter code: Dihydroorotate dehydrogenase B (NAD(+)), catalytic subunit (305 aa).

FMN is bound by residues serine 21 and 45–46; that span reads KA. Substrate contacts are provided by residues lysine 45 and 69 to 73; that span reads NAIGL. FMN-binding residues include asparagine 99 and asparagine 127. Position 127 (asparagine 127) interacts with substrate. Catalysis depends on cysteine 130, which acts as the Nucleophile. FMN-binding residues include lysine 165 and isoleucine 191. 192-193 lines the substrate pocket; that stretch reads NT. FMN is bound by residues glycine 217, 243-244, and 265-266; these read GG and GT.

This sequence belongs to the dihydroorotate dehydrogenase family. Type 1 subfamily. As to quaternary structure, heterotetramer of 2 PyrK and 2 PyrD type B subunits. FMN serves as cofactor.

Its subcellular location is the cytoplasm. It catalyses the reaction (S)-dihydroorotate + NAD(+) = orotate + NADH + H(+). It participates in pyrimidine metabolism; UMP biosynthesis via de novo pathway; orotate from (S)-dihydroorotate (NAD(+) route): step 1/1. Catalyzes the conversion of dihydroorotate to orotate with NAD(+) as electron acceptor. In Halalkalibacterium halodurans (strain ATCC BAA-125 / DSM 18197 / FERM 7344 / JCM 9153 / C-125) (Bacillus halodurans), this protein is Dihydroorotate dehydrogenase B (NAD(+)), catalytic subunit (pyrD).